Reading from the N-terminus, the 405-residue chain is Arginine biosynthesis bifunctional protein ArgJ (405 aa).

Residues threonine 155, lysine 181, threonine 192, glutamate 278, asparagine 400, and threonine 405 each contribute to the substrate site. Residue threonine 192 is the Nucleophile of the active site.

This sequence belongs to the ArgJ family. As to quaternary structure, heterotetramer of two alpha and two beta chains.

The protein resides in the cytoplasm. It catalyses the reaction N(2)-acetyl-L-ornithine + L-glutamate = N-acetyl-L-glutamate + L-ornithine. The catalysed reaction is L-glutamate + acetyl-CoA = N-acetyl-L-glutamate + CoA + H(+). It participates in amino-acid biosynthesis; L-arginine biosynthesis; L-ornithine and N-acetyl-L-glutamate from L-glutamate and N(2)-acetyl-L-ornithine (cyclic): step 1/1. It functions in the pathway amino-acid biosynthesis; L-arginine biosynthesis; N(2)-acetyl-L-ornithine from L-glutamate: step 1/4. Catalyzes two activities which are involved in the cyclic version of arginine biosynthesis: the synthesis of N-acetylglutamate from glutamate and acetyl-CoA as the acetyl donor, and of ornithine by transacetylation between N(2)-acetylornithine and glutamate. This chain is Arginine biosynthesis bifunctional protein ArgJ, found in Dehalococcoides mccartyi (strain CBDB1).